Reading from the N-terminus, the 86-residue chain is RNA-binding protein Hfq (86 aa).

The region spanning 9-68 is the Sm domain; that stretch reads DPYLNVLRKERIPVSIYLVNGIKLQGQVESFDQFVVLLKNTVSQMVYKHAISTVVPSRPV.

The protein belongs to the Hfq family. Homohexamer.

RNA chaperone that binds small regulatory RNA (sRNAs) and mRNAs to facilitate mRNA translational regulation in response to envelope stress, environmental stress and changes in metabolite concentrations. Also binds with high specificity to tRNAs. This chain is RNA-binding protein Hfq, found in Saccharophagus degradans (strain 2-40 / ATCC 43961 / DSM 17024).